Consider the following 277-residue polypeptide: DNA-binding transcriptional activator MhpR (277 aa).

The HTH iclR-type domain occupies 12-74 (VRGLTRGLML…PSDDSFRLTI (63 aa)). A DNA-binding region (H-T-H motif) is located at residues 34–53 (VGLLAELSGLHRTTVRRLLE). The IclR-ED domain occupies 89–262 (ISALAAPLLG…AKQIEEGVES (174 aa)).

Its function is as follows. Activator of the mhpABCDFE operon coding for components of the 3-hydroxyphenylpropionate degradation pathway. This chain is DNA-binding transcriptional activator MhpR (mhpR), found in Escherichia coli (strain K12).